The primary structure comprises 359 residues: MDYTTLTTQDPDPNYTESGLASTSEDSQFLYGLGGESSPGHYGGAVSSRAVGGFRHSPVFQTFPLHWPETSAGIPSNLTAYGRSTGTLSFYPSAASALGPITSPPLYSASSFLLGSAPPAEREGSPKFLETLKTERASPLTSDLLPLEPRSPSILQVGYIGGGGQEFSLFQSTEDRECVNCGATVTPLWRRDMSGHYLCNACGLYHKMNGQNRPLIRPKKRLIVSKRAGTQCSNCHTSTTTLWRRNASGDPVCNACGLYYKLHNVNRPLTMKKEGIQTRNRKVSSRSKKKKQLDNPFEPPKAGVEEPSPYPFGPLLFHGQMPPMGHMINPPHHFLQSPRISHSAPAVSYRQAASGVTPP.

The interval 1–21 (MDYTTLTTQDPDPNYTESGLA) is disordered. GATA-type zinc fingers lie at residues 178-202 (CVNC…CNAC) and 232-256 (CSNC…CNAC). Disordered regions lie at residues 271–311 (MKKE…SPYP) and 323–359 (PMGH…VTPP). Over residues 279 to 291 (RNRKVSSRSKKKK) the composition is skewed to basic residues.

In terms of tissue distribution, expressed in the developing ventral blood island, and in both tadpole and adult erythrocytes.

Its subcellular location is the nucleus. Transcription factor that acts synergistically with tal1/scl and lmo2 to specify embryonic dorsal mesoderm to a hematopoietic fate. This is GATA-binding factor 1-A (gata1-a) from Xenopus laevis (African clawed frog).